The primary structure comprises 356 residues: MTTPEDIIRRDVLAMTGYPVPDATGFVKLDAMENPYSLPAPLAAELGERLAHVALNRYPAPRPAALIDRLRAVTGVPAACDVLLGNGSDELISMLAMACAKPGAKVLAPVPGFVMYELSAKFAQLEFVGVPLRADLTLDIDAMLAALAEHRPALVYLAYPNNPTGTLYPDEDVERIIAAAAASLVVIDEAYQPFAQRSWLPRAAQFDNVVVMRTMSKLGLAGIRLGYLVGLPAWLVQFDKVRPPYNVNVLTQAAAEFLLERVDVLDAQAAQLRDARTALAHAIGALPGATVFPSAGNFLLVRVPDAAAVFDVLLTERVLIKNVSKMHPLLANCVRVTVGSPEENARLLAALKLALP.

Lys217 bears the N6-(pyridoxal phosphate)lysine mark.

Belongs to the class-II pyridoxal-phosphate-dependent aminotransferase family. Histidinol-phosphate aminotransferase subfamily. Homodimer. Pyridoxal 5'-phosphate is required as a cofactor.

It catalyses the reaction L-histidinol phosphate + 2-oxoglutarate = 3-(imidazol-4-yl)-2-oxopropyl phosphate + L-glutamate. It functions in the pathway amino-acid biosynthesis; L-histidine biosynthesis; L-histidine from 5-phospho-alpha-D-ribose 1-diphosphate: step 7/9. This is Histidinol-phosphate aminotransferase 2 from Burkholderia pseudomallei (strain 1710b).